Consider the following 697-residue polypeptide: Exocyst complex component 7 (697 aa).

The segment at 1–384 (MIPPQEASAR…FSTVLTVFPI (384 aa)) is SEC8 and ARHQ binding. 2 coiled-coil regions span residues 5–42 (QEAS…TRNM) and 63–85 (VHKQ…SCLD). At S133 the chain carries Phosphoserine. Residues 238 to 270 (FRKSSSSSGVPYSPAIPNKRKDTPTKKPIKRPG) are disordered.

Belongs to the EXO70 family. As to quaternary structure, the exocyst complex is composed of EXOC1, EXOC2, EXOC3, EXOC4, EXOC5, EXOC6, EXOC7 and EXOC8. Interacts with RAB11FIP3. Interacts with ARHQ in a GTP-dependent manner.

It localises to the cytoplasm. It is found in the cytosol. Its subcellular location is the cell membrane. The protein localises to the midbody. The protein resides in the midbody ring. Component of the exocyst complex involved in the docking of exocytic vesicles with fusion sites on the plasma membrane. In adipocytes, plays a crucial role in targeting SLC2A4 vesicle to the plasma membrane in response to insulin, perhaps directing the vesicle to the precise site of fusion. It is required for neuron survival and plays an essential role in cortical development. The polypeptide is Exocyst complex component 7 (Exoc7) (Mus musculus (Mouse)).